The primary structure comprises 347 residues: P2Y purinoceptor 12 (347 aa).

Residues 1–33 (MDVPGVNTTSANTTFSPGTSTLCVRDYKITQVL) lie on the Extracellular side of the membrane. 2 N-linked (GlcNAc...) asparagine glycosylation sites follow: Asn7 and Asn12. 2 disulfides stabilise this stretch: Cys23-Cys276 and Cys103-Cys181. A helical membrane pass occupies residues 34–56 (FPLLYTVLFFAGLITNSLAMRIF). At 57 to 67 (FQIRSKSNFII) the chain is on the cytoplasmic side. Phosphoserine occurs at positions 61 and 63. A helical transmembrane segment spans residues 68 to 88 (FLKNTVISDLLMILTFPFKIL). Residues 89 to 103 (SDAKLGAGPLRTLVC) are Extracellular-facing. ADP is bound by residues Arg99, Cys103, and Tyr111. Residues 104–124 (QVTSVTFYFTMYISISFLGLI) traverse the membrane as a helical segment. Topologically, residues 125–148 (TIDRYLKTTRPFKTSSPSNLLGAK) are cytoplasmic. The helical transmembrane segment at 149 to 168 (ILSVVIWAFMFLISLPNMIL) threads the bilayer. Residues 162 to 165 (SLPN), 181 to 185 (CSFLK), His193, and Asn197 each bind ADP. Residues 169-191 (TNRRPKDKDVTKCSFLKSEFGLV) lie on the Extracellular side of the membrane. Residues 192-213 (WHEIVNYICQVIFWINFLIVIV) form a helical membrane-spanning segment. The Cytoplasmic segment spans residues 214 to 239 (CYSLITKELYRSYVRTRGSAKVPKKK). The chain crosses the membrane as a helical span at residues 240–265 (VNVKVFIIIAVFFICFVPFHFARIPY). ADP-binding positions include 262–265 (RIPY), Gln269, and Lys286. Topologically, residues 266-284 (TLSQTRAVFDCSAENTLFY) are extracellular. A helical transmembrane segment spans residues 285 to 304 (VKESTLWLTSLNACLDPFIY). Residues 305-347 (FFLCKSFRNSLTSMLRCSNSTSTSGTNKKKGQEGGEPSEETPM) lie on the Cytoplasmic side of the membrane. The disordered stretch occupies residues 321-347 (CSNSTSTSGTNKKKGQEGGEPSEETPM).

The protein belongs to the G-protein coupled receptor 1 family.

It is found in the cell membrane. Functionally, receptor for ADP and ATP coupled to G-proteins that inhibit the adenylyl cyclase second messenger system. Required for normal platelet aggregation and blood coagulation. This is P2Y purinoceptor 12 (P2ry12) from Mus musculus (Mouse).